The primary structure comprises 336 residues: Tryptophan--tRNA ligase (336 aa).

ATP is bound by residues 15–17 and 24–25; these read QPT and GN. Residues 16 to 25 carry the 'HIGH' region motif; that stretch reads PTSDSLHLGN. D141 contributes to the L-tryptophan binding site. Residues 153–155, I192, and 201–205 contribute to the ATP site; these read GED and KMSKS. The 'KMSKS' region signature appears at 201 to 205; that stretch reads KMSKS.

This sequence belongs to the class-I aminoacyl-tRNA synthetase family. In terms of assembly, homodimer.

It localises to the cytoplasm. The catalysed reaction is tRNA(Trp) + L-tryptophan + ATP = L-tryptophyl-tRNA(Trp) + AMP + diphosphate + H(+). Functionally, catalyzes the attachment of tryptophan to tRNA(Trp). The polypeptide is Tryptophan--tRNA ligase (Mycobacterium tuberculosis (strain CDC 1551 / Oshkosh)).